Reading from the N-terminus, the 207-residue chain is MEITEIKVKKRDKIGKQFAKKYRRSNLIPGVVYGAHLKENIHILVEKKDLWSLIKKGHAKEQHLLRLIIENGENTITENAILQDLQIDPIKDEFLHVDFHAITLEELVDVYVPILLVGEAKGIKQGGILQHGVEEILIRALPLDVPPHIEVDITDLEIGESITVGDLKFPENIKVLTPLDEVVVGIIPPKGYTEEVTTGEAQTESQT.

The protein belongs to the bacterial ribosomal protein bL25 family. CTC subfamily. In terms of assembly, part of the 50S ribosomal subunit; part of the 5S rRNA/L5/L18/L25 subcomplex. Contacts the 5S rRNA. Binds to the 5S rRNA independently of L5 and L18.

In terms of biological role, this is one of the proteins that binds to the 5S RNA in the ribosome where it forms part of the central protuberance. The chain is Large ribosomal subunit protein bL25 from Dictyoglomus turgidum (strain DSM 6724 / Z-1310).